The primary structure comprises 1045 residues: MEQLWLEHDLSEEWIPQPQEQGSDNSSEPPTTSNVNNTQSTGRGSSGTSTEHGTFKKGRNDAPDVPQWKQVNAKNPVARDIFARLDLENMFEESSKQSPPSKSPTKNPSKKSSNNSSRRSSSSVGKLSNVSNMQSSPSKDPFVSQDYEKESISSSQFSKKYSEGSLKSQQSNTRSNSVHEKQNTDHASNASSSSSVVSSPSLKPNNTSPLKLFQGASDPFTREHLNQLTQDVKSNSFENGEKQFSLPEPRRPQKPMRTTERKASLNTKDLYQEVEEVMARLRGRMPNSGRESTIFLPRKLSGLREEEEQDEISVEVSQEDSSNAFPSLSDQLHLKSLQSMKRVTSIFNDNDDSFPSASSSPQRQAYMTDKMPLREIDVGSSQSSSKTARLNSSPKSTLKTSSVKTRRSHSAQSSRKVSDYPNMVVITPADLPEGIDTTQGSMEFDRIHNRWRRKGHDSDLGFDFETDEDASLSHPERTILFKAASTRHQANNDPNNLEKQQPHSFPLRKQNVAQSEFPKHSLRDNSENAPQILSSFHDLSLQNESFDEMFNGRYENGSPIPFISSGSGLKSKADKDAEYSFSVSRQSIIQILSDVEPYEPFWKRIIQLDISRRHLDSLIGLSELCPSIEELTLEGNEIAYLTGCPVTIRDLNAVENRLSSLTSFSNLLNLQYLDISYNQLEDLTGLSSLIHLRELKVDSNHLWSLDGIQHLDGLLKLSACNNRIKELSFTNSNLHRLEELLLGNNEIEEIEEISSLQNLMVLQLDNNKLTNLKASQPMIHLRILRISNNAIHQLEVDQFPHLRTLYMDLNRFNRPPDIRRLKRLVNFSFRTQDPEASNFVIQPSLDIRNLYLSNNTFVTLDCKHMFLGVRYLELANVQLKEVPKYIATSMPNLRVLDLSHNYISDIESLKPLQMIHRLYLVGNRIKKMRNLCDILANLKQLNVLDLRMNPLNFNIYPVIDDSIYELSAASKYQQSINQKGHHRKEDPQKQWQEKELAFSSTLSEAWRTRRKMYAEAILLACPHLEWLDGSDVSQSSRAAFTKSSN.

Positions 1-11 (MEQLWLEHDLS) are enriched in basic and acidic residues. Disordered stretches follow at residues 1 to 269 (MEQL…NTKD) and 282 to 329 (RGRM…PSLS). The span at 18–39 (PQEQGSDNSSEPPTTSNVNNTQ) shows a compositional bias: polar residues. Composition is skewed to low complexity over residues 40–52 (STGRGSSGTSTEH), 96–132 (KQSPPSKSPTKNPSKKSSNNSSRRSSSSVGKLSNVSN), and 152–165 (ISSSQFSKKYSEGS). Residues 166 to 176 (LKSQQSNTRSN) are compositionally biased toward polar residues. Residues 187–201 (ASNASSSSSVVSSPS) show a composition bias toward low complexity. Polar residues-rich tracts occupy residues 226–238 (NQLTQDVKSNSFE) and 320–329 (DSSNAFPSLS). Serine 360 bears the Phosphoserine mark. A disordered region spans residues 377–417 (DVGSSQSSSKTARLNSSPKSTLKTSSVKTRRSHSAQSSRKV). The segment covering 379-403 (GSSQSSSKTARLNSSPKSTLKTSSV) has biased composition (polar residues). Position 558 is a phosphoserine (serine 558). 15 LRR repeats span residues 604–625 (RIIQLDISRRHLDSLIGLSELC), 627–646 (SIEELTLEGNEIAYLTGCPV), 647–668 (TIRDLNAVENRLSSLTSFSNLL), 669–690 (NLQYLDISYNQLEDLTGLSSLI), 691–712 (HLRELKVDSNHLWSLDGIQHLD), 713–734 (GLLKLSACNNRIKELSFTNSNL), 736–757 (RLEELLLGNNEIEEIEEISSLQ), 758–779 (NLMVLQLDNNKLTNLKASQPMI), 780–801 (HLRILRISNNAIHQLEVDQFPH), 802–822 (LRTLYMDLNRFNRPPDIRRLK), 846–867 (DIRNLYLSNNTFVTLDCKHMFL), 868–889 (GVRYLELANVQLKEVPKYIATS), 892–913 (NLRVLDLSHNYISDIESLKPLQ), 914–935 (MIHRLYLVGNRIKKMRNLCDIL), and 940–962 (QLNVLDLRMNPLNFNIYPVIDDS). The LRRCT domain occupies 1005-1043 (AWRTRRKMYAEAILLACPHLEWLDGSDVSQSSRAAFTKS).

As to quaternary structure, interacts with sid4. When hyperphosphorylated, interacts with byr4. Also interacts with spg1, sid2, cdc13 and cdc16. In terms of processing, phosphorylated by cdc7 and cdk1. Hyperphosphorylated during anaphase. Dephosphorylated by par1.

Its subcellular location is the cytoplasm. The protein localises to the cytoskeleton. It localises to the microtubule organizing center. It is found in the spindle pole body. Its function is as follows. Essential for the onset of septum formation. Involved in the organization of astral microtubules during mitosis. Acts as a bridge between sid4 and the other SIN proteins mediating their association with the spindle pole body (SPB). The sid4-cdc11 complex organizes a signaling hub on the SPB which coordinates cell and nuclear division. The protein is Septation initiation network scaffold protein cdc11 (cdc11) of Schizosaccharomyces pombe (strain 972 / ATCC 24843) (Fission yeast).